Consider the following 39-residue polypeptide: Photosystem II reaction center protein J (39 aa).

The helical transmembrane segment at Leu9–Tyr29 threads the bilayer.

It belongs to the PsbJ family. As to quaternary structure, PSII is composed of 1 copy each of membrane proteins PsbA, PsbB, PsbC, PsbD, PsbE, PsbF, PsbH, PsbI, PsbJ, PsbK, PsbL, PsbM, PsbT, PsbY, PsbZ, Psb30/Ycf12, at least 3 peripheral proteins of the oxygen-evolving complex and a large number of cofactors. It forms dimeric complexes.

The protein resides in the plastid. The protein localises to the chloroplast thylakoid membrane. Functionally, one of the components of the core complex of photosystem II (PSII). PSII is a light-driven water:plastoquinone oxidoreductase that uses light energy to abstract electrons from H(2)O, generating O(2) and a proton gradient subsequently used for ATP formation. It consists of a core antenna complex that captures photons, and an electron transfer chain that converts photonic excitation into a charge separation. The protein is Photosystem II reaction center protein J of Cyanidium caldarium (Red alga).